The chain runs to 313 residues: Acetyl-coenzyme A carboxylase carboxyl transferase subunit alpha (313 aa).

The CoA carboxyltransferase C-terminal domain occupies 36–286 (RLDKEVKTIY…KEYFLDTLRT (251 aa)).

It belongs to the AccA family. As to quaternary structure, acetyl-CoA carboxylase is a heterohexamer composed of biotin carboxyl carrier protein (AccB), biotin carboxylase (AccC) and two subunits each of ACCase subunit alpha (AccA) and ACCase subunit beta (AccD).

The protein resides in the cytoplasm. It catalyses the reaction N(6)-carboxybiotinyl-L-lysyl-[protein] + acetyl-CoA = N(6)-biotinyl-L-lysyl-[protein] + malonyl-CoA. It functions in the pathway lipid metabolism; malonyl-CoA biosynthesis; malonyl-CoA from acetyl-CoA: step 1/1. Component of the acetyl coenzyme A carboxylase (ACC) complex. First, biotin carboxylase catalyzes the carboxylation of biotin on its carrier protein (BCCP) and then the CO(2) group is transferred by the carboxyltransferase to acetyl-CoA to form malonyl-CoA. This is Acetyl-coenzyme A carboxylase carboxyl transferase subunit alpha from Helicobacter acinonychis (strain Sheeba).